A 443-amino-acid polypeptide reads, in one-letter code: Tubulin beta-2 chain (443 aa).

Positions 1 to 4 match the MREI motif motif; sequence MREI. 8 residues coordinate GTP: Gln11, Glu69, Ser138, Gly142, Thr143, Gly144, Asn204, and Asn226. Residue Glu69 participates in Mg(2+) binding. Position 438 is a 5-glutamyl polyglutamate (Glu438).

This sequence belongs to the tubulin family. In terms of assembly, dimer of alpha and beta chains. A typical microtubule is a hollow water-filled tube with an outer diameter of 25 nm and an inner diameter of 15 nM. Alpha-beta heterodimers associate head-to-tail to form protofilaments running lengthwise along the microtubule wall with the beta-tubulin subunit facing the microtubule plus end conferring a structural polarity. Microtubules usually have 13 protofilaments but different protofilament numbers can be found in some organisms and specialized cells. Mg(2+) is required as a cofactor. Some glutamate residues at the C-terminus are polyglycylated, resulting in polyglycine chains on the gamma-carboxyl group. Glycylation is mainly limited to tubulin incorporated into axonemes (cilia and flagella) whereas glutamylation is prevalent in neuronal cells, centrioles, axonemes, and the mitotic spindle. Both modifications can coexist on the same protein on adjacent residues, and lowering polyglycylation levels increases polyglutamylation, and reciprocally. The precise function of polyglycylation is still unclear. In terms of processing, some glutamate residues at the C-terminus are polyglutamylated, resulting in polyglutamate chains on the gamma-carboxyl group. Polyglutamylation plays a key role in microtubule severing by spastin (SPAST). SPAST preferentially recognizes and acts on microtubules decorated with short polyglutamate tails: severing activity by SPAST increases as the number of glutamates per tubulin rises from one to eight, but decreases beyond this glutamylation threshold. In terms of tissue distribution, nervous system specific.

The protein resides in the cytoplasm. Its subcellular location is the cytoskeleton. Functionally, tubulin is the major constituent of microtubules, a cylinder consisting of laterally associated linear protofilaments composed of alpha- and beta-tubulin heterodimers. Microtubules grow by the addition of GTP-tubulin dimers to the microtubule end, where a stabilizing cap forms. Below the cap, tubulin dimers are in GDP-bound state, owing to GTPase activity of alpha-tubulin. The polypeptide is Tubulin beta-2 chain (tubb2) (Xenopus laevis (African clawed frog)).